A 426-amino-acid chain; its full sequence is Serine--tRNA ligase (426 aa).

233 to 235 serves as a coordination point for L-serine; sequence TSE. 264-266 is a binding site for ATP; the sequence is RAE. Glu287 is an L-serine binding site. 351 to 354 provides a ligand contact to ATP; the sequence is EISS. Residue Ser387 coordinates L-serine.

It belongs to the class-II aminoacyl-tRNA synthetase family. Type-1 seryl-tRNA synthetase subfamily. Homodimer. The tRNA molecule binds across the dimer.

Its subcellular location is the cytoplasm. It carries out the reaction tRNA(Ser) + L-serine + ATP = L-seryl-tRNA(Ser) + AMP + diphosphate + H(+). It catalyses the reaction tRNA(Sec) + L-serine + ATP = L-seryl-tRNA(Sec) + AMP + diphosphate + H(+). It functions in the pathway aminoacyl-tRNA biosynthesis; selenocysteinyl-tRNA(Sec) biosynthesis; L-seryl-tRNA(Sec) from L-serine and tRNA(Sec): step 1/1. Its function is as follows. Catalyzes the attachment of serine to tRNA(Ser). Is also able to aminoacylate tRNA(Sec) with serine, to form the misacylated tRNA L-seryl-tRNA(Sec), which will be further converted into selenocysteinyl-tRNA(Sec). The polypeptide is Serine--tRNA ligase (Xanthomonas campestris pv. campestris (strain 8004)).